A 695-amino-acid polypeptide reads, in one-letter code: MAETKIIYHMDEEETPYLVKLPVAPERVTLADFKNVLSNRPVHAYKFFFKSMDQDFGVVKEEIFDDNAKLPCFNGRVVSWLVLAEGAHSDAGSQGTDSHTDLPPPLERTGGIGDSRPPSFHPNVASSRDGMDNETGTESMVSHRRERARRRNRDEAARTNGHPRGDRRRDLGLPPDSASTVLSSELESSSFIDSDEEDNTSRLSSSTEQSTSSRLVRKHKCRRRKQRLRQTDRASSFSSITDSTMSLNIITVTLNMERHHFLGISIVGQSNDRGDGGIYIGSIMKGGAVAADGRIEPGDMLLQVNDVNFENMSNDDAVRVLREIVSQTGPISLTVAKCWDPTPRSYFTIPRADPVRPIDPAAWLSHTAALTGALPRYGTSPCSSAITRTSSSSLTSSVPGAPQLEEAPLTVKSDMSAIVRVMQLPDSGLEIRDRMWLKITIANAVIGADVVDWLYTHVEGFKERREARKYASSMLKHGFLRHTVNKITFSEQCYYVFGDLCSNLASLNLNSGSSGASDQDTLAPLPHPSVPWPLGQGYPYQYPGPPPCFPPAYQDPGFSCGSGSAGSQQSEGSKSSGSTRSSHRTPGREERRATGAGGSGSESDHTVPSGSGSTGWWERPVSQLSRGSSPRSQASAVAPGLPPLHPLTKAYAVVGGPPGGPPVRELAAVPPELTGSRQSFQKAMGNPCEFFVDIM.

Positions 1–85 (MAETKIIYHM…RVVSWLVLAE (85 aa)) constitute a DIX domain. Positions 89–235 (SDAGSQGTDS…QRLRQTDRAS (147 aa)) are disordered. A compositionally biased stretch (basic residues) spans 142-151 (SHRRERARRR). Positions 152–171 (NRDEAARTNGHPRGDRRRDL) are enriched in basic and acidic residues. Over residues 177–192 (SASTVLSSELESSSFI) the composition is skewed to low complexity. S194 bears the Phosphoserine mark. Over residues 201 to 214 (SRLSSSTEQSTSSR) the composition is skewed to low complexity. A compositionally biased stretch (basic residues) spans 215–228 (LVRKHKCRRRKQRL). The PDZ domain occupies 251–323 (TVTLNMERHH…NDDAVRVLRE (73 aa)). The DEP domain occupies 425–499 (PDSGLEIRDR…SEQCYYVFGD (75 aa)). Residues 559-580 (SCGSGSAGSQQSEGSKSSGSTR) are compositionally biased toward low complexity. Positions 559 to 641 (SCGSGSAGSQ…SQASAVAPGL (83 aa)) are disordered. Polar residues predominate over residues 622-635 (SQLSRGSSPRSQAS).

This sequence belongs to the DSH family. In terms of assembly, interacts with CXXC4. Interacts (via PDZ domain) with TMEM88. Interacts with BRD7 and INVS. Interacts (via PDZ domain) with VANGL1 and VANGL2 (via C-terminus). Interacts (via PDZ domain) with NXN. Interacts with ARRB1; the interaction is enhanced by phosphorylation of DVL1. Interacts with CYLD. Interacts (via PDZ domain) with RYK. Self-associates (via DIX domain) and forms higher homooligomers. Interacts (via PDZ domain) with DACT1 and FZD7, where DACT1 and FZD7 compete for the same binding site. Interacts (via DEP domain) with MUSK; the interaction is direct and mediates the formation a DVL1, MUSK and PAK1 ternary complex involved in AChR clustering. Interacts with DCDC2. Interacts with FOXK2. Interacts with PKD1 (via extracellular domain). Interacts (via PDZ domain) with CCDC88C/DAPLE; competes with CCDC88C for binding to frizzled receptor FZD7 and dissociates from CCDC88C following initiation of non-canonical Wnt signaling when CCDC88C displaces DVL1 from ligand-activated FZD7. In terms of processing, ubiquitinated; undergoes both 'Lys-48'-linked ubiquitination, leading to its subsequent degradation by the ubiquitin-proteasome pathway, and 'Lys-63'-linked ubiquitination. The interaction with INVS is required for ubiquitination. Deubiquitinated by CYLD, which acts on 'Lys-63'-linked ubiquitin chains. As to expression, high levels are seen in the brain, testis and kidney, lower levels in the ovary, breast, muscle, liver and small intestine, and very low levels are seen in the spleen and thymus. A moderate level expression is seen in the heart.

Its subcellular location is the cell membrane. The protein localises to the cytoplasm. It localises to the cytosol. The protein resides in the cytoplasmic vesicle. Participates in Wnt signaling by binding to the cytoplasmic C-terminus of frizzled family members and transducing the Wnt signal to down-stream effectors. Plays a role both in canonical and non-canonical Wnt signaling. Plays a role in the signal transduction pathways mediated by multiple Wnt genes. Required for LEF1 activation upon WNT1 and WNT3A signaling. DVL1 and PAK1 form a ternary complex with MUSK which is important for MUSK-dependent regulation of AChR clustering during the formation of the neuromuscular junction (NMJ). This chain is Segment polarity protein dishevelled homolog DVL-1 (Dvl1), found in Mus musculus (Mouse).